The sequence spans 195 residues: Peptidyl-tRNA hydrolase (195 aa).

Position 17 (Tyr-17) interacts with tRNA. Residue His-22 is the Proton acceptor of the active site. 3 residues coordinate tRNA: Tyr-68, Asn-70, and Asn-116.

It belongs to the PTH family. Monomer.

The protein localises to the cytoplasm. The catalysed reaction is an N-acyl-L-alpha-aminoacyl-tRNA + H2O = an N-acyl-L-amino acid + a tRNA + H(+). Its function is as follows. Hydrolyzes ribosome-free peptidyl-tRNAs (with 1 or more amino acids incorporated), which drop off the ribosome during protein synthesis, or as a result of ribosome stalling. Catalyzes the release of premature peptidyl moieties from peptidyl-tRNA molecules trapped in stalled 50S ribosomal subunits, and thus maintains levels of free tRNAs and 50S ribosomes. In Shewanella baltica (strain OS155 / ATCC BAA-1091), this protein is Peptidyl-tRNA hydrolase.